Here is a 677-residue protein sequence, read N- to C-terminus: WD repeat-containing protein 48 (677 aa).

Tyr28 is modified (phosphotyrosine). 8 WD repeats span residues 28 to 67 (YNRN…QDPY), 73 to 112 (HHTD…CMST), 115 to 154 (THKD…ALTA), 166 to 205 (GNKD…KLMK), 208 to 247 (GHTD…CIAT), 250 to 289 (VHDE…IRVL), 292 to 334 (EEKA…NFRA), and 358 to 397 (KGGA…KVED). Lys214 is modified (N6-acetyllysine). Lys578 is subject to N6-acetyllysine. A disordered region spans residues 607-628 (LDNESQTTSSSNNEKPGEQEKE). The span at 609–620 (NESQTTSSSNNE) shows a compositional bias: low complexity. Thr613 bears the Phosphothreonine mark.

This sequence belongs to the WD repeat WDR48 family. As to quaternary structure, interacts with USP46. Interacts with USP1. Interacts with USP12. Component of the USP12-WDR20-WDR48 deubiquitinating complex. Component of the USP12-DMWD-WDR48 deubiquitinating complex. Interacts with PHLPP1. Interacts with RAD51AP1; the interaction is direct and promotes formation of a trimeric complex with RAD51 via RAD51AP1. Interacts with ATAD5; the interaction regulates USP1-mediated PCNA deubiquitination. Interacts with RAD51; the interaction is enhanced under replication stress. Interacts with ITCH; the interaction is more efficient when both USP12 and WDR48/UAF1 are involved and may facilitate recruitment of the USP12 deubiquitinating complex to Notch. In terms of assembly, (Microbial infection) Interacts with papillomavirus HPV11 E1 protein. (Microbial infection) Interacts with Saimiriine herpesvirus TIP protein. As to quaternary structure, (Microbial infection) Interacts with human cytomegalovirus protein UL138. In terms of assembly, (Microbial infection) Interacts with Epstein-Barr virus protein EBNA3. In terms of tissue distribution, ubiquitous.

It is found in the nucleus. The protein localises to the cytoplasm. Its subcellular location is the lysosome. The protein resides in the late endosome. Its function is as follows. Regulator of deubiquitinating complexes, which acts as a strong activator of USP1, USP12 and USP46. Enhances the USP1-mediated deubiquitination of FANCD2; USP1 being almost inactive by itself. Activates deubiquitination by increasing the catalytic turnover without increasing the affinity of deubiquitinating enzymes for the substrate. Also activates deubiquitinating activity of complexes containing USP12. In complex with USP12, acts as a potential tumor suppressor by positively regulating PHLPP1 stability. Docks at the distal end of the USP12 fingers domain and induces a cascade of structural changes leading to the activation of the enzyme. Together with RAD51AP1, promotes DNA repair by stimulating RAD51-mediated homologous recombination. Binds single-stranded DNA (ssDNA) and double-stranded DNA (dsDNA). DNA-binding is required both for USP1-mediated deubiquitination of FANCD2 and stimulation of RAD51-mediated homologous recombination: both WDR48/UAF1 and RAD51AP1 have coordinated role in DNA-binding during these processes. Together with ATAD5 and by regulating USP1 activity, has a role in PCNA-mediated translesion synthesis (TLS) by deubiquitinating monoubiquitinated PCNA. Together with ATAD5, has a role in recruiting RAD51 to stalled forks during replication stress. In terms of biological role, (Microbial infection) In case of infection by Herpesvirus saimiri, may play a role in vesicular transport or membrane fusion events necessary for transport to lysosomes. Induces lysosomal vesicle formation via interaction with Herpesvirus saimiri tyrosine kinase-interacting protein (TIP). Subsequently, TIP recruits tyrosine-protein kinase LCK, resulting in down-regulation of T-cell antigen receptor TCR. May play a role in generation of enlarged endosomal vesicles via interaction with TIP. In case of infection by papillomavirus HPV11, promotes the maintenance of the viral genome via its interaction with HPV11 helicase E1. In Homo sapiens (Human), this protein is WD repeat-containing protein 48.